The following is a 148-amino-acid chain: 3-dehydroquinate dehydratase (148 aa).

The active-site Proton acceptor is the Tyr-22. Residues Asn-73, His-79, and Asp-86 each contribute to the substrate site. Catalysis depends on His-99, which acts as the Proton donor. Substrate contacts are provided by residues 100–101 and Arg-110; that span reads LS.

It belongs to the type-II 3-dehydroquinase family. In terms of assembly, homododecamer.

The catalysed reaction is 3-dehydroquinate = 3-dehydroshikimate + H2O. Its pathway is metabolic intermediate biosynthesis; chorismate biosynthesis; chorismate from D-erythrose 4-phosphate and phosphoenolpyruvate: step 3/7. Functionally, catalyzes a trans-dehydration via an enolate intermediate. The sequence is that of 3-dehydroquinate dehydratase from Prochlorococcus marinus (strain MIT 9211).